The sequence spans 337 residues: Protein-methionine-sulfoxide reductase catalytic subunit MsrP (337 aa).

Positions 1–48 (MLIKIPSRSDCSESEVTSETLYLSRRRLLGASFAGLALASGLPRLGFA) form a signal peptide, tat-type signal. Mo-molybdopterin is bound by residues asparagine 94, 97–98 (YE), cysteine 152, threonine 187, asparagine 237, arginine 242, and 253–255 (SIK).

It belongs to the MsrP family. As to quaternary structure, heterodimer of a catalytic subunit (MsrP) and a heme-binding subunit (MsrQ). Requires Mo-molybdopterin as cofactor. In terms of processing, predicted to be exported by the Tat system. The position of the signal peptide cleavage has not been experimentally proven.

Its subcellular location is the periplasm. It catalyses the reaction L-methionyl-[protein] + a quinone + H2O = L-methionyl-(S)-S-oxide-[protein] + a quinol. The enzyme catalyses L-methionyl-[protein] + a quinone + H2O = L-methionyl-(R)-S-oxide-[protein] + a quinol. Functionally, part of the MsrPQ system that repairs oxidized periplasmic proteins containing methionine sulfoxide residues (Met-O), using respiratory chain electrons. Thus protects these proteins from oxidative-stress damage caused by reactive species of oxygen and chlorine generated by the host defense mechanisms. MsrPQ is essential for the maintenance of envelope integrity under bleach stress, rescuing a wide series of structurally unrelated periplasmic proteins from methionine oxidation. The catalytic subunit MsrP is non-stereospecific, being able to reduce both (R-) and (S-) diastereoisomers of methionine sulfoxide. The protein is Protein-methionine-sulfoxide reductase catalytic subunit MsrP of Pseudomonas aeruginosa (strain ATCC 15692 / DSM 22644 / CIP 104116 / JCM 14847 / LMG 12228 / 1C / PRS 101 / PAO1).